The following is a 289-amino-acid chain: Acetyl-coenzyme A carboxylase carboxyl transferase subunit beta (289 aa).

Residues 23 to 289 (HWIKCPSCSA…YDENPCLLHL (267 aa)) form the CoA carboxyltransferase N-terminal domain. Residues Cys27, Cys30, Cys46, and Cys49 each coordinate Zn(2+). Residues 27–49 (CPSCSALMYYKEVIAQHHVCPKC) form a C4-type zinc finger.

It belongs to the AccD/PCCB family. In terms of assembly, acetyl-CoA carboxylase is a heterohexamer composed of biotin carboxyl carrier protein (AccB), biotin carboxylase (AccC) and two subunits each of ACCase subunit alpha (AccA) and ACCase subunit beta (AccD). Zn(2+) serves as cofactor.

The protein resides in the cytoplasm. The enzyme catalyses N(6)-carboxybiotinyl-L-lysyl-[protein] + acetyl-CoA = N(6)-biotinyl-L-lysyl-[protein] + malonyl-CoA. Its pathway is lipid metabolism; malonyl-CoA biosynthesis; malonyl-CoA from acetyl-CoA: step 1/1. Its function is as follows. Component of the acetyl coenzyme A carboxylase (ACC) complex. Biotin carboxylase (BC) catalyzes the carboxylation of biotin on its carrier protein (BCCP) and then the CO(2) group is transferred by the transcarboxylase to acetyl-CoA to form malonyl-CoA. The polypeptide is Acetyl-coenzyme A carboxylase carboxyl transferase subunit beta (Wolinella succinogenes (strain ATCC 29543 / DSM 1740 / CCUG 13145 / JCM 31913 / LMG 7466 / NCTC 11488 / FDC 602W) (Vibrio succinogenes)).